The following is a 741-amino-acid chain: MSLSMRDPVIPGTSMAYHPFLPHRAPDFAMSAVLGHQPPFFPALTLPPNGAAALSLPGALAKPIMDQLVGAAETGIPFSSLGPQAHLRPLKTMEPEEDVEDDPKVHLEAKELWDQFHKRGTEMVITKSGRRMFPPFKVRCSGLDKKAKYILLMDIIAADDCRYKFHNSRWMVAGKADPEMPKRMYIHPDSPATGEQWMSKVVTFHKLKLTNNISDKHGFTLAFPSDHATWQGNYSFGTQTILNSMHKYQPRFHIVRANDILKLPYSTFRTYLFPETEFIAVTAYQNDKITQLKIDNNPFAKGFRDTGNGRREKRKQLTLQSMRVFEERHKKETSDESSSEQAAFNCFAQASSPAVSIVGTSNLKDLCPSEAESDAEAESKEEHGPEACDAAKISTTTAEEPGRDKGSPATRAQLFPAEPSRARDTARLDKASPDSRHSPATISSSTRVPGADERRSPGREGPVATKVDEARAIPAKDAFAPLSVQTDATAHLAQGPLPGLGFAPGLAGQQFFNGHPLFLHPGQFAMGGAFSSMAAGMGPLLATVSGASTGVSGLESTAMASAAAAQGLSGASAATLPFHLQQHVLASQGLAMSPFGSLFPYPYTYMAAAAAASTAAASSSVHRHPFLNLNSMRPRLRYSPYSIPVPVPDSSSLLATALPSMASAAGPLDGKAAALAASPASVAVDSGSELNSRSSTLSSGSVSLSPKLCSEKEAATSELQSIQRLVSGLEAKPDRSCSGSP.

The T-box; first part DNA-binding region spans 107-220 (LEAKELWDQF…NNISDKHGFT (114 aa)). A DNA-binding region (T-box; second part) is located at residues 241 to 305 (ILNSMHKYQP…NNPFAKGFRD (65 aa)). A Phosphoserine modification is found at Ser-369. Positions 369–469 (SEAESDAEAE…EGPVATKVDE (101 aa)) are disordered. Composition is skewed to basic and acidic residues over residues 377-386 (AESKEEHGPE) and 420-437 (SRARDTARLDKASPDSRH). Phosphoserine occurs at positions 432, 438, 456, 705, 736, 738, and 740. Residues 438-447 (SPATISSSTR) show a composition bias toward polar residues.

As to quaternary structure, interacts with PML. As to expression, in adults, highest levels in lung. Also found in brain, heart, kidney, liver and ovary.

It localises to the nucleus. Its function is as follows. Transcriptional repressor involved in developmental processes. Binds to the palindromic T site 5'-TTCACACCTAGGTGTGAA-3' DNA sequence, or a half-site, which are present in the regulatory region of several genes. Probably plays a role in limb pattern formation. Required for mammary placode induction, and maintenance of the mammary buds during development. Involved in branching morphogenesis in both developing lungs and adult mammary glands, via negative modulation of target genes; acting redundantly with TBX2. Required, together with TBX2, to maintain cell proliferation in the embryonic lung mesenchyme; perhaps acting downstream of SHH, BMP and TGFbeta signaling. Involved in modulating early inner ear development, acting independently of, and also redundantly with, TBX2 in different subregions of the developing ear. Acts as a negative regulator of PML function in cellular senescence. This chain is T-box transcription factor TBX3 (Tbx3), found in Mus musculus (Mouse).